A 364-amino-acid polypeptide reads, in one-letter code: Fructose-bisphosphate aldolase B (364 aa).

Position 2 is an N-acetylalanine (alanine 2). Lysine 13 carries the N6-succinyllysine modification. Serine 36 carries the post-translational modification Phosphoserine. Threonine 39 carries the post-translational modification Phosphothreonine. Position 43 (arginine 43) interacts with beta-D-fructose 1,6-bisphosphate. Threonine 119 is modified (phosphothreonine). Lysine 121 bears the N6-succinyllysine mark. Position 132 is a phosphoserine (serine 132). The active-site Proton acceptor is glutamate 188. The active-site Schiff-base intermediate with dihydroxyacetone-P is the lysine 230. 4 positions are modified to phosphoserine: serine 272, serine 276, serine 299, and serine 301. Position 272-274 (272-274 (SGG)) interacts with beta-D-fructose 1,6-bisphosphate. Arginine 304 contacts beta-D-fructose 1,6-bisphosphate. Serine 309 is subject to Phosphoserine. An N6-succinyllysine modification is found at lysine 317.

It belongs to the class I fructose-bisphosphate aldolase family. In terms of assembly, homotetramer. Interacts with BBS1, BBS2, BBS4 and BBS7. Forms a ternary complex with G6PD and TP53; this interaction is direct.

It is found in the cytoplasm. The protein resides in the cytosol. The protein localises to the cytoskeleton. It localises to the microtubule organizing center. Its subcellular location is the centrosome. It is found in the centriolar satellite. It catalyses the reaction beta-D-fructose 1,6-bisphosphate = D-glyceraldehyde 3-phosphate + dihydroxyacetone phosphate. The enzyme catalyses beta-D-fructose 1-phosphate = D-glyceraldehyde + dihydroxyacetone phosphate. It functions in the pathway carbohydrate degradation; glycolysis; D-glyceraldehyde 3-phosphate and glycerone phosphate from D-glucose: step 4/4. The protein operates within carbohydrate biosynthesis; gluconeogenesis. It participates in carbohydrate metabolism; fructose metabolism. Its function is as follows. Catalyzes the aldol cleavage of fructose 1,6-biphosphate to form two triosephosphates dihydroxyacetone phosphate and D-glyceraldehyde 3-phosphate in glycolysis as well as the reverse stereospecific aldol addition reaction in gluconeogenesis. In fructolysis, metabolizes fructose 1-phosphate derived from the phosphorylation of dietary fructose by fructokinase into dihydroxyacetone phosphate and D-glyceraldehyde. Acts as an adapter independently of its enzymatic activity, exerts a tumor suppressor role by stabilizing the ternary complex with G6PD and TP53 to inhibit G6PD activity and keep oxidative pentose phosphate metabolism in check. The chain is Fructose-bisphosphate aldolase B (ALDOB) from Ovis aries (Sheep).